Reading from the N-terminus, the 283-residue chain is Acetyl-coenzyme A carboxylase carboxyl transferase subunit beta (283 aa).

The 257-residue stretch at 27-283 (VWVKCERCGE…LLDLHLRGEK (257 aa)) folds into the CoA carboxyltransferase N-terminal domain. Residues Cys31, Cys34, Cys50, and Cys53 each contribute to the Zn(2+) site. The C4-type zinc-finger motif lies at 31-53 (CERCGEILFKKELDKNYKVCLKC).

This sequence belongs to the AccD/PCCB family. In terms of assembly, acetyl-CoA carboxylase is a heterohexamer composed of biotin carboxyl carrier protein (AccB), biotin carboxylase (AccC) and two subunits each of ACCase subunit alpha (AccA) and ACCase subunit beta (AccD). Requires Zn(2+) as cofactor.

It is found in the cytoplasm. It catalyses the reaction N(6)-carboxybiotinyl-L-lysyl-[protein] + acetyl-CoA = N(6)-biotinyl-L-lysyl-[protein] + malonyl-CoA. The protein operates within lipid metabolism; malonyl-CoA biosynthesis; malonyl-CoA from acetyl-CoA: step 1/1. Its function is as follows. Component of the acetyl coenzyme A carboxylase (ACC) complex. Biotin carboxylase (BC) catalyzes the carboxylation of biotin on its carrier protein (BCCP) and then the CO(2) group is transferred by the transcarboxylase to acetyl-CoA to form malonyl-CoA. This Pelotomaculum thermopropionicum (strain DSM 13744 / JCM 10971 / SI) protein is Acetyl-coenzyme A carboxylase carboxyl transferase subunit beta.